A 67-amino-acid chain; its full sequence is Large ribosomal subunit protein bL35 (67 aa).

The protein belongs to the bacterial ribosomal protein bL35 family.

The chain is Large ribosomal subunit protein bL35 from Leptospira interrogans serogroup Icterohaemorrhagiae serovar Lai (strain 56601).